A 260-amino-acid chain; its full sequence is Putative cysteine-rich repeat secretory protein 23 (260 aa).

The signal sequence occupies residues 1–31; the sequence is MSSSFVYKSLFLVPILAVVAMQLSFVQSVLS. 2 consecutive Gnk2-homologous domains span residues 38-136 and 142-254; these read YLHH…NISY and LPEQ…LYLF.

This sequence belongs to the cysteine-rich repeat secretory protein family.

The protein resides in the secreted. This chain is Putative cysteine-rich repeat secretory protein 23 (CRRSP23), found in Arabidopsis thaliana (Mouse-ear cress).